The following is a 345-amino-acid chain: Fe-S cluster assembly protein DRE2 (345 aa).

Positions 11–166 (FSHSSNGVVL…SIGSSSGSSS (156 aa)) are N-terminal SAM-like domain. Positions 147–166 (SKPATASSSFSIGSSSGSSS) are disordered. Positions 153–166 (SSSFSIGSSSGSSS) are enriched in low complexity. Positions 167–210 (ALPLRRKLGSGASANAKKSLWATQPASANDLIDEASLLRDADFV) are linker. Cysteine 220, cysteine 233, cysteine 236, and cysteine 238 together coordinate [2Fe-2S] cluster. Positions 220 to 238 (CDVGAGQGKKKKACKGCTC) are fe-S binding site A. 4 residues coordinate [4Fe-4S] cluster: cysteine 307, cysteine 310, cysteine 318, and cysteine 321. 2 consecutive short sequence motifs (cx2C motif) follow at residues 307–310 (CGSC) and 318–321 (CSSC). The interval 307–321 (CGSCFLGDAFRCSSC) is fe-S binding site B.

Belongs to the anamorsin family. In terms of assembly, monomer. Interacts with TAH18. Interacts with MIA40. [2Fe-2S] cluster serves as cofactor. Requires [4Fe-4S] cluster as cofactor.

It localises to the cytoplasm. It is found in the mitochondrion intermembrane space. Functionally, component of the cytosolic iron-sulfur (Fe-S) protein assembly (CIA) machinery required for the maturation of extramitochondrial Fe-S proteins. Part of an electron transfer chain functioning in an early step of cytosolic Fe-S biogenesis, facilitating the de novo assembly of a [4Fe-4S] cluster on the scaffold complex CFD1-NBP35. Electrons are transferred to DRE2 from NADPH via the FAD- and FMN-containing protein TAH18. TAH18-DRE2 are also required for the assembly of the diferric tyrosyl radical cofactor of ribonucleotide reductase (RNR), probably by providing electrons for reduction during radical cofactor maturation in the catalytic small subunit RNR2. This Mycosarcoma maydis (Corn smut fungus) protein is Fe-S cluster assembly protein DRE2.